A 376-amino-acid chain; its full sequence is Carbamoyl phosphate synthase small chain (376 aa).

Residues 1–187 (MRAFLALEDG…AADGAYAWPG (187 aa)) are CPSase. 3 residues coordinate L-glutamine: serine 45, glycine 239, and glycine 241. Residues 191–376 (RLVVYDYGIK…RGMVREAVGR (186 aa)) form the Glutamine amidotransferase type-1 domain. The active-site Nucleophile is cysteine 266. Positions 267, 270, 308, 310, and 311 each coordinate L-glutamine. Residues histidine 349 and glutamate 351 contribute to the active site.

Belongs to the CarA family. As to quaternary structure, composed of two chains; the small (or glutamine) chain promotes the hydrolysis of glutamine to ammonia, which is used by the large (or ammonia) chain to synthesize carbamoyl phosphate. Tetramer of heterodimers (alpha,beta)4.

The enzyme catalyses hydrogencarbonate + L-glutamine + 2 ATP + H2O = carbamoyl phosphate + L-glutamate + 2 ADP + phosphate + 2 H(+). The catalysed reaction is L-glutamine + H2O = L-glutamate + NH4(+). It participates in amino-acid biosynthesis; L-arginine biosynthesis; carbamoyl phosphate from bicarbonate: step 1/1. Its pathway is pyrimidine metabolism; UMP biosynthesis via de novo pathway; (S)-dihydroorotate from bicarbonate: step 1/3. Its function is as follows. Small subunit of the glutamine-dependent carbamoyl phosphate synthetase (CPSase). CPSase catalyzes the formation of carbamoyl phosphate from the ammonia moiety of glutamine, carbonate, and phosphate donated by ATP, constituting the first step of 2 biosynthetic pathways, one leading to arginine and/or urea and the other to pyrimidine nucleotides. The small subunit (glutamine amidotransferase) binds and cleaves glutamine to supply the large subunit with the substrate ammonia. The chain is Carbamoyl phosphate synthase small chain from Nitratidesulfovibrio vulgaris (strain DSM 19637 / Miyazaki F) (Desulfovibrio vulgaris).